The following is a 492-amino-acid chain: Protein nucleotidyltransferase YdiU (492 aa).

Gly88, Gly90, Arg91, Lys111, Asp123, Gly124, Arg174, and Arg181 together coordinate ATP. The Proton acceptor role is filled by Asp250. Positions 251 and 260 each coordinate Mg(2+). ATP is bound at residue Asp260.

The protein belongs to the SELO family. The cofactor is Mg(2+). Requires Mn(2+) as cofactor.

The catalysed reaction is L-seryl-[protein] + ATP = 3-O-(5'-adenylyl)-L-seryl-[protein] + diphosphate. The enzyme catalyses L-threonyl-[protein] + ATP = 3-O-(5'-adenylyl)-L-threonyl-[protein] + diphosphate. It carries out the reaction L-tyrosyl-[protein] + ATP = O-(5'-adenylyl)-L-tyrosyl-[protein] + diphosphate. It catalyses the reaction L-histidyl-[protein] + UTP = N(tele)-(5'-uridylyl)-L-histidyl-[protein] + diphosphate. The catalysed reaction is L-seryl-[protein] + UTP = O-(5'-uridylyl)-L-seryl-[protein] + diphosphate. The enzyme catalyses L-tyrosyl-[protein] + UTP = O-(5'-uridylyl)-L-tyrosyl-[protein] + diphosphate. In terms of biological role, nucleotidyltransferase involved in the post-translational modification of proteins. It can catalyze the addition of adenosine monophosphate (AMP) or uridine monophosphate (UMP) to a protein, resulting in modifications known as AMPylation and UMPylation. This Rhodopseudomonas palustris (strain HaA2) protein is Protein nucleotidyltransferase YdiU.